Here is a 199-residue protein sequence, read N- to C-terminus: FMN-dependent NADH:quinone oxidoreductase (199 aa).

FMN is bound by residues serine 9 and 95-98 (MYNF).

The protein belongs to the azoreductase type 1 family. In terms of assembly, homodimer. Requires FMN as cofactor.

It carries out the reaction 2 a quinone + NADH + H(+) = 2 a 1,4-benzosemiquinone + NAD(+). It catalyses the reaction N,N-dimethyl-1,4-phenylenediamine + anthranilate + 2 NAD(+) = 2-(4-dimethylaminophenyl)diazenylbenzoate + 2 NADH + 2 H(+). Its function is as follows. Quinone reductase that provides resistance to thiol-specific stress caused by electrophilic quinones. Also exhibits azoreductase activity. Catalyzes the reductive cleavage of the azo bond in aromatic azo compounds to the corresponding amines. In Dechloromonas aromatica (strain RCB), this protein is FMN-dependent NADH:quinone oxidoreductase.